Reading from the N-terminus, the 508-residue chain is Cytochrome P450 monooxygenase tenA (508 aa).

A helical membrane pass occupies residues 8–24; that stretch reads VSLPYLILSACLSVILL. Residue Cys456 coordinates heme.

It belongs to the cytochrome P450 family. The cofactor is heme.

Its subcellular location is the membrane. The protein operates within secondary metabolite biosynthesis. Functionally, cytochrome P450 monooxygenase; part of the gene cluster that mediates the biosynthesis of tenellin-type 2-pyridones, iron-chelating compounds involved in iron stress tolerance, competition with the natural competitor fungus Metarhizium robertsii and insect hosts infection. TenA catalyzes an oxidative ring expansion of pretenellin A and 14-hydropretellenin A to form the 2-pyridone core, leading to the production of pretenellin B and pyridovericin, respectively. The pathway begins with the assembly of the polyketide-amino acid backbone by the hybrid PKS-NRPS tenS with the help of the enoyl reductase tenC. These enzymes catalyze the synthesis of the pyrrolidine-2-dione intermediates pretellinin A, 11-hydropretellenin A, 12-hydropretellenin A, 13-hydropretellenin A, 14-hydropretellenin A, 12-oxopretellenin A and prototellinin D. The cytochrome P450 monooxygenase tenA then catalyzes an oxidative ring expansion of pretenellin A and 14-hydropretellenin A to form the 2-pyridone core, leading to pretenellin B and pyridovericin, respectively. The cytochrome P450 monooxygenase tenB is then required for the selective N-hydroxylation of the 2-pyridone nitrogen of yield tellinin and 15-hydroxytellenin (15-HT), respectively. The UDP-glucosyltransferase GT1 and the methyltransferase MT1, located outside the tenS gene cluster, contribute to the stepwise glycosylation and methylation of 15-HT to obtain the glycoside pyridovericin-N-O-(4-O-methyl-beta-D-glucopyranoside) (PMGP). Additional related compounds such as 1-O-methyl-15-HT, (8Z)-1-O-methyl-15-HT, and O-methyltenellin A are also produced but the enzymes involved in their biosynthesis have still to be determined. The polypeptide is Cytochrome P450 monooxygenase tenA (Beauveria bassiana (White muscardine disease fungus)).